We begin with the raw amino-acid sequence, 710 residues long: MQGKKPGGSSGGGRSGELQGDEAQRNKKKKKKVSCFSNIKIFLVSECALMLAQGTVGAYLVSVLTTLERRFNLQSADVGVIASSFEIGNLALILFVSYFGARGHRPRLIGCGGIVMALGALLSALPEFLTHQYKYEAGEIRWGAEGRDVCAANGSGGDEGPDPDLICRNRTATNMMYLLLIGAQVLLGIGATPVQPLGVSYIDDHVRRKDSSLYIGILFTMLVFGPACGFILGSFCTKIYVDAVFIDTSNLDITPDDPRWIGAWWGGFLLCGALLFFSSLLMFGFPQSLPPHSEPAMESEQAMLSEREYERPKPSNGVLRHPLEPDSSASCFQQLRVIPKVTKHLLSNPVFTCIILAACMEIAVVAGFAAFLGKYLEQQFNLTTSSANQLLGMTAIPCACLGIFLGGLLVKKLSLSALGAIRMAMLVNLVSTACYVSFLFLGCDTGPVAGVTVPYGNSTAPGSALDPYSPCNNNCECQTDSFTPVCGADGITYLSACFAGCNSTNLTGCACLTTVPAENATVVPGKCPSPGCQEAFLTFLCVMCICSLIGAMAQTPSVIILIRTVSPELKSYALGVLFLLLRLLGFIPPPLIFGAGIDSTCLFWSTFCGEQGACVLYDNVVYRYLYVSIAIALKSFAFILYTTTWQCLRKNYKRYIKNHEGGLSTSEFFASTLTLDNLGRDPVPANQTHRTKFIYNLEDHEWCENMESVL.

At M1 the chain carries N-acetylmethionine. Positions 1–15 (MQGKKPGGSSGGGRS) are enriched in gly residues. The segment at 1–25 (MQGKKPGGSSGGGRSGELQGDEAQR) is disordered. The Cytoplasmic portion of the chain corresponds to 1-40 (MQGKKPGGSSGGGRSGELQGDEAQRNKKKKKKVSCFSNIK). Residues 41-60 (IFLVSECALMLAQGTVGAYL) form a helical membrane-spanning segment. Topologically, residues 61-79 (VSVLTTLERRFNLQSADVG) are extracellular. Residues 80-100 (VIASSFEIGNLALILFVSYFG) traverse the membrane as a helical segment. Topologically, residues 101 to 106 (ARGHRP) are cytoplasmic. A helical membrane pass occupies residues 107 to 131 (RLIGCGGIVMALGALLSALPEFLTH). Residues 132 to 174 (QYKYEAGEIRWGAEGRDVCAANGSGGDEGPDPDLICRNRTATN) lie on the Extracellular side of the membrane. N-linked (GlcNAc...) asparagine glycans are attached at residues N153 and N169. The chain crosses the membrane as a helical span at residues 175 to 203 (MMYLLLIGAQVLLGIGATPVQPLGVSYID). The Cytoplasmic portion of the chain corresponds to 204–222 (DHVRRKDSSLYIGILFTML). Residues 223–243 (VFGPACGFILGSFCTKIYVDA) traverse the membrane as a helical segment. Residues 244-261 (VFIDTSNLDITPDDPRWI) lie on the Extracellular side of the membrane. A helical transmembrane segment spans residues 262–286 (GAWWGGFLLCGALLFFSSLLMFGFP). Residues 287–344 (QSLPPHSEPAMESEQAMLSEREYERPKPSNGVLRHPLEPDSSASCFQQLRVIPKVTKH) lie on the Cytoplasmic side of the membrane. The chain crosses the membrane as a helical span at residues 345-366 (LLSNPVFTCIILAACMEIAVVA). The Extracellular segment spans residues 367 to 386 (GFAAFLGKYLEQQFNLTTSS). Residue N381 is glycosylated (N-linked (GlcNAc...) asparagine). Residues 387–410 (ANQLLGMTAIPCACLGIFLGGLLV) traverse the membrane as a helical segment. Topologically, residues 411–414 (KKLS) are cytoplasmic. A helical transmembrane segment spans residues 415-438 (LSALGAIRMAMLVNLVSTACYVSF). Topologically, residues 439-539 (LFLGCDTGPV…PGCQEAFLTF (101 aa)) are extracellular. N-linked (GlcNAc...) asparagine glycosylation occurs at N457. The Kazal-like domain maps to 465 to 513 (LDPYSPCNNNCECQTDSFTPVCGADGITYLSACFAGCNSTNLTGCACLT). 3 disulfides stabilise this stretch: C471–C501, C477–C497, and C486–C511. N502, N505, and N519 each carry an N-linked (GlcNAc...) asparagine glycan. A helical membrane pass occupies residues 540 to 562 (LCVMCICSLIGAMAQTPSVIILI). Over 563–571 (RTVSPELKS) the chain is Cytoplasmic. A helical transmembrane segment spans residues 572–597 (YALGVLFLLLRLLGFIPPPLIFGAGI). Topologically, residues 598 to 630 (DSTCLFWSTFCGEQGACVLYDNVVYRYLYVSIA) are extracellular. Residues 631–648 (IALKSFAFILYTTTWQCL) form a helical membrane-spanning segment. At 649–705 (RKNYKRYIKNHEGGLSTSEFFASTLTLDNLGRDPVPANQTHRTKFIYNLEDHEWCEN) the chain is on the cytoplasmic side.

It belongs to the organo anion transporter (TC 2.A.60) family. In terms of tissue distribution, generally the expression of isoform 1 is higher than that of isoform 2. As to expression, expressed in placental trophoblasts. Expressed in pancreas, kidney, liver, lung, brain, heart, cerebellum, peripheral blood leukocyte, colon, small intestine, ovary, testis, prostate, thyroid, thymus and spleen. Expressed in fetal brain, heart, kidney, liver, lung, skeletal muscle, spleen and pancreas. In testis, detected in spermatogonia at different stages and absent from Sertoli cells. Expressed in the choroid plexus epithelium, at the basolateral membrane. In brain, also very abundant in the gray matter of the frontal cortex, but not associated with neuronal cell bodies. Not detected in the white matter. Expressed in heart, brain, cerebellum, testis, lung, thyroid, spoleen and liver. In testis, primarily localized to the basal membrane of Sertoli cells and weakly expressed within the tubules. In testis, also present in spermatogonia at different stages. In brain, expressed in the choroid plexus epithelium, at the apical membrane as well as in the subapical intracellular vesicular compartments. In brain, also associated with neuronal bodies and axons in both the gray and the white matters of the frontal cortex.

It is found in the basolateral cell membrane. It localises to the apical cell membrane. The protein resides in the basal cell membrane. The catalysed reaction is L-thyroxine(out) = L-thyroxine(in). It carries out the reaction prostaglandin E1(out) = prostaglandin E1(in). The enzyme catalyses prostaglandin E2(out) = prostaglandin E2(in). It catalyses the reaction prostaglandin F2alpha(out) = prostaglandin F2alpha(in). The catalysed reaction is (5Z,8Z,11Z,14Z)-eicosatetraenoate(out) = (5Z,8Z,11Z,14Z)-eicosatetraenoate(in). It carries out the reaction taurocholate(out) = taurocholate(in). The enzyme catalyses glycocholate(out) = glycocholate(in). It catalyses the reaction estrone 3-sulfate(out) = estrone 3-sulfate(in). The catalysed reaction is argipressin(out) = argipressin(in). Stimulated by extracellular acidic pH. In terms of biological role, putative organic anion antiporter with apparent broad substrate specificity. Recognizes various substrates including thyroid hormone L-thyroxine, prostanoids such as prostaglandin E1 and E2, bile acids such as taurocholate, glycolate and glycochenodeoxycholate and peptide hormones such as L-arginine vasopressin, likely operating in a tissue-specific manner. The transport mechanism, its electrogenicity and potential tissue-specific counterions remain to be elucidated. This is Solute carrier organic anion transporter family member 3A1 (SLCO3A1) from Homo sapiens (Human).